Consider the following 199-residue polypeptide: Holliday junction branch migration complex subunit RuvA (199 aa).

Residues 1-63 form a domain I region; the sequence is MYEYLTGLVT…EDNISLFGFT (63 aa). The tract at residues 64–142 is domain II; that stretch reads DQNEKNLFMQ…NESSSSLFAT (79 aa). Positions 143–149 are flexible linker; sequence TQLTVDA. Positions 150–199 are domain III; it reads TVNRELKDALEALAALGYKERDIKKVQKALMKEEQMATDEYLRQALRLLN.

This sequence belongs to the RuvA family. As to quaternary structure, homotetramer. Forms an RuvA(8)-RuvB(12)-Holliday junction (HJ) complex. HJ DNA is sandwiched between 2 RuvA tetramers; dsDNA enters through RuvA and exits via RuvB. An RuvB hexamer assembles on each DNA strand where it exits the tetramer. Each RuvB hexamer is contacted by two RuvA subunits (via domain III) on 2 adjacent RuvB subunits; this complex drives branch migration. In the full resolvosome a probable DNA-RuvA(4)-RuvB(12)-RuvC(2) complex forms which resolves the HJ.

It localises to the cytoplasm. In terms of biological role, the RuvA-RuvB-RuvC complex processes Holliday junction (HJ) DNA during genetic recombination and DNA repair, while the RuvA-RuvB complex plays an important role in the rescue of blocked DNA replication forks via replication fork reversal (RFR). RuvA specifically binds to HJ cruciform DNA, conferring on it an open structure. The RuvB hexamer acts as an ATP-dependent pump, pulling dsDNA into and through the RuvAB complex. HJ branch migration allows RuvC to scan DNA until it finds its consensus sequence, where it cleaves and resolves the cruciform DNA. The sequence is that of Holliday junction branch migration complex subunit RuvA from Limosilactobacillus reuteri subsp. reuteri (strain JCM 1112) (Lactobacillus reuteri).